The primary structure comprises 24 residues: Brevinin-1BYb (24 aa).

A disulfide bridge links Cys-18 with Cys-24.

Expressed by the skin glands.

It is found in the secreted. Antibacterial activity against Gram-positive bacterium S.aureus and Gram-negative bacterium E.coli. Has moderate antifungal activity against C.albicans and strong hemolytic activity. The polypeptide is Brevinin-1BYb (Rana boylii (Foothill yellow-legged frog)).